The following is a 377-amino-acid chain: Nitric oxide reductase FlRd-NAD(+) reductase (377 aa).

This sequence belongs to the FAD-dependent oxidoreductase family. FAD serves as cofactor.

The protein localises to the cytoplasm. The catalysed reaction is 2 reduced [nitric oxide reductase rubredoxin domain] + NAD(+) + H(+) = 2 oxidized [nitric oxide reductase rubredoxin domain] + NADH. It participates in nitrogen metabolism; nitric oxide reduction. In terms of biological role, one of at least two accessory proteins for anaerobic nitric oxide (NO) reductase. Reduces the rubredoxin moiety of NO reductase. The polypeptide is Nitric oxide reductase FlRd-NAD(+) reductase (Shigella boydii serotype 18 (strain CDC 3083-94 / BS512)).